The primary structure comprises 357 residues: MASARNGVSKDELLPVYERRSQRDGDISGSVKSFASTIGNSASAAVLAYCLSSISMTLVNKYVVSGASWNLSFLYLAMQSFIGTVAILACKKTGLIQNLALFDLKKAQTWLPISLLLVGMIYTGNKALQFLSVPVYTIFKNLTIIVIAYGEVLMVGGGVKPLALLSFGLMVLSSVVAAWADIQNATTATVGASSDSTAAALSALNAGYAWMGTNVIFSASYALGMRRVIKKTNFDNWDVMFYNNLLSIPILLLASVLAEDWSSENLQRNFPAELRQSLFIGILYSGVAAVFISYCTAWCVRATSSTTYAMVGALNKLPLAVAGIVFFAAPVTFGSVSAIVLGFISGLVYARAKSTGA.

Residues 1-33 (MASARNGVSKDELLPVYERRSQRDGDISGSVKS) are Cytoplasmic-facing. Residues 34–54 (FASTIGNSASAAVLAYCLSSI) traverse the membrane as a helical segment. At 55–68 (SMTLVNKYVVSGAS) the chain is on the lumenal side. Residues 69–89 (WNLSFLYLAMQSFIGTVAILA) traverse the membrane as a helical segment. Over 90 to 107 (CKKTGLIQNLALFDLKKA) the chain is Cytoplasmic. A helical membrane pass occupies residues 108–128 (QTWLPISLLLVGMIYTGNKAL). A topological domain (lumenal) is located at residue Gln-129. The chain crosses the membrane as a helical span at residues 130–150 (FLSVPVYTIFKNLTIIVIAYG). Residues 151–161 (EVLMVGGGVKP) are Cytoplasmic-facing. The helical transmembrane segment at 162–181 (LALLSFGLMVLSSVVAAWAD) threads the bilayer. Over 182–196 (IQNATTATVGASSDS) the chain is Lumenal. Asn-184 carries an N-linked (GlcNAc...) asparagine glycan. A helical transmembrane segment spans residues 197–217 (TAAALSALNAGYAWMGTNVIF). Over 218-236 (SASYALGMRRVIKKTNFDN) the chain is Cytoplasmic. The chain crosses the membrane as a helical span at residues 237–257 (WDVMFYNNLLSIPILLLASVL). The Lumenal portion of the chain corresponds to 258 to 277 (AEDWSSENLQRNFPAELRQS). Residues 278–298 (LFIGILYSGVAAVFISYCTAW) form a helical membrane-spanning segment. The Cytoplasmic portion of the chain corresponds to 299-306 (CVRATSST). A helical transmembrane segment spans residues 307–327 (TYAMVGALNKLPLAVAGIVFF). Over 328-332 (AAPVT) the chain is Lumenal. Residues 333-352 (FGSVSAIVLGFISGLVYARA) traverse the membrane as a helical segment. Residues 353–357 (KSTGA) are Cytoplasmic-facing.

This sequence belongs to the TPT transporter family. SLC35D subfamily. As to quaternary structure, homooligomer.

Its subcellular location is the golgi apparatus membrane. The protein localises to the cytoplasmic vesicle membrane. The protein resides in the endoplasmic reticulum membrane. Functionally, involved in the import of GDP-mannose from the cytoplasm into the Golgi lumen. This Neosartorya fischeri (strain ATCC 1020 / DSM 3700 / CBS 544.65 / FGSC A1164 / JCM 1740 / NRRL 181 / WB 181) (Aspergillus fischerianus) protein is GDP-mannose transporter 2 (gmt2).